The primary structure comprises 329 residues: Cytosolic arginine sensor for mTORC1 subunit 2 (329 aa).

2 consecutive ACT domains span residues 72–139 and 262–322; these read ADAT…MHTL and ELWK…NALQ.

This sequence belongs to the GATS family. As to quaternary structure, may form homodimers and heterodimers.

The protein localises to the cytoplasm. Its subcellular location is the cytosol. Functions as a negative regulator of the TORC1 signaling pathway. In Xenopus tropicalis (Western clawed frog), this protein is Cytosolic arginine sensor for mTORC1 subunit 2.